Reading from the N-terminus, the 151-residue chain is Large ribosomal subunit protein uL22 (151 aa).

It belongs to the universal ribosomal protein uL22 family. As to quaternary structure, part of the 50S ribosomal subunit.

This protein binds specifically to 23S rRNA. It makes multiple contacts with different domains of the 23S rRNA in the assembled 50S subunit and ribosome. In terms of biological role, the globular domain of the protein is located near the polypeptide exit tunnel on the outside of the subunit, while an extended beta-hairpin is found that lines the wall of the exit tunnel in the center of the 70S ribosome. The chain is Large ribosomal subunit protein uL22 from Thermoplasma acidophilum (strain ATCC 25905 / DSM 1728 / JCM 9062 / NBRC 15155 / AMRC-C165).